A 580-amino-acid polypeptide reads, in one-letter code: TRAF-type zinc finger domain-containing protein 1 (580 aa).

A2 is subject to N-acetylalanine. Residues 27–103 (IHEIHCQRNI…DLELSVVKLK (77 aa)) form a TRAF-type zinc finger. Phosphoserine is present on residues S278, S320, S326, S327, S409, S415, S430, S450, S469, and S532. 3 disordered regions span residues 395-453 (TANH…SPNR), 468-509 (PSGP…ASGH), and 524-580 (FAPS…EEEE). Positions 407 to 417 (QDSQPENTSAE) are enriched in polar residues.

In terms of assembly, interacts with MAVS, TICAM1, TRAF1, TRAF2, TRAF3 and TRAF6. In terms of tissue distribution, expressed in skeletal muscle, brain, liver, kidney, spleen and bone marrow. Expression depends on STAT1.

Functionally, negative feedback regulator that controls excessive innate immune responses. Regulates both Toll-like receptor 4 (TLR4) and DDX58/RIG1-like helicases (RLH) pathways. May inhibit the LTR pathway by direct interaction with TRAF6 and attenuation of NF-kappa-B activation. May negatively regulate the RLH pathway downstream from MAVS and upstream of NF-kappa-B and IRF3. This Mus musculus (Mouse) protein is TRAF-type zinc finger domain-containing protein 1 (Trafd1).